We begin with the raw amino-acid sequence, 538 residues long: CTP synthase (538 aa).

The tract at residues 1–265 (MARYIFVTGG…DLQVLNYFKL (265 aa)) is amidoligase domain. Ser-13 provides a ligand contact to CTP. Ser-13 is a binding site for UTP. ATP-binding positions include 14–19 (SLGKGL) and Asp-71. Mg(2+) is bound by residues Asp-71 and Glu-139. Residues 146–148 (DIE), 186–191 (KTKPTQ), and Lys-222 each bind CTP. Residues 186-191 (KTKPTQ) and Lys-222 contribute to the UTP site. In terms of domain architecture, Glutamine amidotransferase type-1 spans 291–538 (NIAIIGKYVE…SFIKAAKNHK (248 aa)). Position 353 (Gly-353) interacts with L-glutamine. The active-site Nucleophile; for glutamine hydrolysis is the Cys-380. Residues 381-384 (YGMQ), Glu-404, and Arg-468 each bind L-glutamine. Residues His-513 and Glu-515 contribute to the active site.

It belongs to the CTP synthase family. As to quaternary structure, homotetramer.

It carries out the reaction UTP + L-glutamine + ATP + H2O = CTP + L-glutamate + ADP + phosphate + 2 H(+). The enzyme catalyses L-glutamine + H2O = L-glutamate + NH4(+). It catalyses the reaction UTP + NH4(+) + ATP = CTP + ADP + phosphate + 2 H(+). The protein operates within pyrimidine metabolism; CTP biosynthesis via de novo pathway; CTP from UDP: step 2/2. Allosterically activated by GTP, when glutamine is the substrate; GTP has no effect on the reaction when ammonia is the substrate. The allosteric effector GTP functions by stabilizing the protein conformation that binds the tetrahedral intermediate(s) formed during glutamine hydrolysis. Inhibited by the product CTP, via allosteric rather than competitive inhibition. In terms of biological role, catalyzes the ATP-dependent amination of UTP to CTP with either L-glutamine or ammonia as the source of nitrogen. Regulates intracellular CTP levels through interactions with the four ribonucleotide triphosphates. The polypeptide is CTP synthase (Pelagibacter ubique (strain HTCC1062)).